A 191-amino-acid chain; its full sequence is UPF0398 protein LCABL_17010 (191 aa).

It belongs to the UPF0398 family.

The sequence is that of UPF0398 protein LCABL_17010 from Lacticaseibacillus casei (strain BL23) (Lactobacillus casei).